A 90-amino-acid polypeptide reads, in one-letter code: Large ribosomal subunit protein bL31B (90 aa).

The protein belongs to the bacterial ribosomal protein bL31 family. Type B subfamily. Part of the 50S ribosomal subunit.

The chain is Large ribosomal subunit protein bL31B from Pseudomonas fluorescens (strain SBW25).